Reading from the N-terminus, the 455-residue chain is Killer cell immunoglobulin-like receptor 3DL2 (455 aa).

An N-terminal signal peptide occupies residues 1-21 (MSLTVVSMACVGFFLLQGAWP). Over 22–340 (LMGGQDKPFL…SKSGICRHLH (319 aa)) the chain is Extracellular. 3 Ig-like C2-type domains span residues 42–102 (GGHV…RPHS), 137–202 (GETV…VPHS), and 237–300 (GENV…FRAL). 2 disulfide bridges follow: Cys49/Cys95 and Cys144/Cys195. N-linked (GlcNAc...) asparagine glycosylation is found at Asn179, Asn239, Asn273, and Asn306. Residues Cys244 and Cys293 are joined by a disulfide bond. A helical transmembrane segment spans residues 341–360 (VLIGTSVVIFLFILLLFFLL). The Cytoplasmic portion of the chain corresponds to 361-455 (YRWCSNKKNA…APQSGLEGVF (95 aa)).

The protein belongs to the immunoglobulin superfamily. Interacts with peptide-free HLA-F open conformer. Expressed in astrocytes.

It localises to the cell membrane. Its function is as follows. Receptor on natural killer (NK) cells and T cells for MHC class I molecules. Upon binding of peptide-free HLA-F open conformer, negatively regulates NK and T cell effector functions. Acts as a receptor on astrocytes for HLA-F. Through interaction with HLA-F, may protect motor neurons from astrocyte-induced toxicity. The sequence is that of Killer cell immunoglobulin-like receptor 3DL2 from Homo sapiens (Human).